The sequence spans 310 residues: Zinc-finger homeodomain protein 3 (310 aa).

The segment at Met1–His64 is disordered. Polar residues predominate over residues Leu39–Leu56. The ZF-HD dimerization-type; degenerate zinc-finger motif lies at Tyr87 to Glu136. Disordered regions lie at residues Thr184–Asn220 and Leu281–Pro310. Over residues Glu190–Gly199 the composition is skewed to acidic residues. Positions Lys222–Ser285 form a DNA-binding region, homeobox. Residues Leu281–Asn291 are compositionally biased toward low complexity. The span at Val292 to Pro310 shows a compositional bias: polar residues.

Homo- and heterodimer with other ZFHD proteins. Interacts with MIF2 and MIF3; these interactions prevent nuclear localization and DNA-binding to inhibit transcription regulation activity. Binds to ZHD1, ZHD2 and ZHD11. Interacts with HIPP30. Interacts with KIN10, KIN11 and FLZ8. In terms of tissue distribution, mostly expressed in flowers and inflorescence.

The protein resides in the nucleus. Its function is as follows. Putative transcription factor. This Arabidopsis thaliana (Mouse-ear cress) protein is Zinc-finger homeodomain protein 3 (ZHD3).